Consider the following 294-residue polypeptide: Cytidine deaminase (294 aa).

2 CMP/dCMP-type deaminase domains span residues 48 to 168 (DDDA…FGPK) and 187 to 294 (ALTD…RITF). 89–91 (NME) is a substrate binding site. Histidine 102 provides a ligand contact to Zn(2+). The active-site Proton donor is glutamate 104. Positions 129 and 132 each coordinate Zn(2+).

It belongs to the cytidine and deoxycytidylate deaminase family. Homodimer. The cofactor is Zn(2+).

The enzyme catalyses cytidine + H2O + H(+) = uridine + NH4(+). It carries out the reaction 2'-deoxycytidine + H2O + H(+) = 2'-deoxyuridine + NH4(+). Its function is as follows. This enzyme scavenges exogenous and endogenous cytidine and 2'-deoxycytidine for UMP synthesis. The polypeptide is Cytidine deaminase (Serratia proteamaculans (strain 568)).